A 439-amino-acid polypeptide reads, in one-letter code: Diaminopimelate decarboxylase (439 aa).

Lys-66 is subject to N6-(pyridoxal phosphate)lysine. Residues Gly-248 and 290 to 293 (EPGR) each bind pyridoxal 5'-phosphate. 3 residues coordinate substrate: Arg-293, Arg-330, and Tyr-334. Residue Cys-361 is the Proton donor of the active site. The substrate site is built by Glu-362 and Tyr-390. Tyr-390 lines the pyridoxal 5'-phosphate pocket.

Belongs to the Orn/Lys/Arg decarboxylase class-II family. LysA subfamily. Homodimer. It depends on pyridoxal 5'-phosphate as a cofactor.

The enzyme catalyses meso-2,6-diaminopimelate + H(+) = L-lysine + CO2. Its pathway is amino-acid biosynthesis; L-lysine biosynthesis via DAP pathway; L-lysine from DL-2,6-diaminopimelate: step 1/1. Specifically catalyzes the decarboxylation of meso-diaminopimelate (meso-DAP) to L-lysine. The protein is Diaminopimelate decarboxylase of Bacillus subtilis (strain 168).